The sequence spans 675 residues: NADH-ubiquinone oxidoreductase chain 5 (675 aa).

19 helical membrane passes run leucine 3–leucine 23, valine 27–tyrosine 47, phenylalanine 75–valine 95, histidine 108–valine 127, phenylalanine 132–tyrosine 154, isoleucine 177–phenylalanine 197, phenylalanine 211–isoleucine 231, threonine 251–isoleucine 271, leucine 284–valine 304, valine 311–methionine 329, valine 334–glycine 354, tyrosine 380–tyrosine 400, phenylalanine 413–phenylalanine 433, serine 462–phenylalanine 482, leucine 519–isoleucine 539, tyrosine 564–leucine 584, leucine 593–phenylalanine 613, tyrosine 624–phenylalanine 644, and serine 649–glycine 669.

Belongs to the complex I subunit 5 family.

It is found in the mitochondrion inner membrane. The enzyme catalyses a ubiquinone + NADH + 5 H(+)(in) = a ubiquinol + NAD(+) + 4 H(+)(out). In terms of biological role, core subunit of the mitochondrial membrane respiratory chain NADH dehydrogenase (Complex I) that is believed to belong to the minimal assembly required for catalysis. Complex I functions in the transfer of electrons from NADH to the respiratory chain. The immediate electron acceptor for the enzyme is believed to be ubiquinone. This chain is NADH-ubiquinone oxidoreductase chain 5 (ND5), found in Acanthamoeba castellanii (Amoeba).